Consider the following 458-residue polypeptide: tRNA modification GTPase MnmE (458 aa).

(6S)-5-formyl-5,6,7,8-tetrahydrofolate contacts are provided by R26, E88, and R127. A TrmE-type G domain is found at 224 to 378; that stretch reads GLSTAIIGRP…IEDRINQLFF (155 aa). N234 is a binding site for K(+). GTP-binding positions include 234-239, 253-259, and 278-281; these read NVGKSS, TDIAGTT, and DTAG. S238 contacts Mg(2+). K(+) contacts are provided by T253, I255, and T258. T259 is a Mg(2+) binding site. K458 is a binding site for (6S)-5-formyl-5,6,7,8-tetrahydrofolate.

Belongs to the TRAFAC class TrmE-Era-EngA-EngB-Septin-like GTPase superfamily. TrmE GTPase family. In terms of assembly, homodimer. Heterotetramer of two MnmE and two MnmG subunits. K(+) is required as a cofactor.

The protein resides in the cytoplasm. Exhibits a very high intrinsic GTPase hydrolysis rate. Involved in the addition of a carboxymethylaminomethyl (cmnm) group at the wobble position (U34) of certain tRNAs, forming tRNA-cmnm(5)s(2)U34. The protein is tRNA modification GTPase MnmE of Streptococcus pyogenes serotype M6 (strain ATCC BAA-946 / MGAS10394).